Here is a 137-residue protein sequence, read N- to C-terminus: Peptide methionine sulfoxide reductase MsrB (137 aa).

Positions alanine 7 to glycine 129 constitute a MsrB domain. 4 residues coordinate Zn(2+): cysteine 46, cysteine 49, cysteine 95, and cysteine 98. Cysteine 118 functions as the Nucleophile in the catalytic mechanism.

This sequence belongs to the MsrB Met sulfoxide reductase family. Zn(2+) serves as cofactor.

It catalyses the reaction L-methionyl-[protein] + [thioredoxin]-disulfide + H2O = L-methionyl-(R)-S-oxide-[protein] + [thioredoxin]-dithiol. The sequence is that of Peptide methionine sulfoxide reductase MsrB from Escherichia coli O8 (strain IAI1).